A 165-amino-acid polypeptide reads, in one-letter code: MSHPALTQLRALRYFKEIPALDSRLLDWLLLEDSMTKRFEQEGKRVSVTLLREAFVGPHEVAEEVALLPVESRYWLREILLCADGEPWLAGRTVVPESTLCGPELALQNLGKTPLGRYLFTSSTLTRDFIEIGRDAALWGRRSRLRLSGKPLMLTELFLPASPLY.

Positions 35, 77, 115, and 156 each coordinate substrate.

This sequence belongs to the UbiC family. As to quaternary structure, monomer.

The protein resides in the cytoplasm. It carries out the reaction chorismate = 4-hydroxybenzoate + pyruvate. It functions in the pathway cofactor biosynthesis; ubiquinone biosynthesis. Its function is as follows. Removes the pyruvyl group from chorismate, with concomitant aromatization of the ring, to provide 4-hydroxybenzoate (4HB) for the ubiquinone pathway. This is Chorismate pyruvate-lyase from Citrobacter koseri (strain ATCC BAA-895 / CDC 4225-83 / SGSC4696).